The chain runs to 277 residues: NADPH-dependent 7-cyano-7-deazaguanine reductase (277 aa).

Residue 86–88 (IES) participates in substrate binding. 88–89 (SK) contacts NADPH. Residue Cys184 is the Thioimide intermediate of the active site. Catalysis depends on Asp191, which acts as the Proton donor. 223–224 (HE) provides a ligand contact to substrate. 252 to 253 (RG) provides a ligand contact to NADPH.

Belongs to the GTP cyclohydrolase I family. QueF type 2 subfamily. As to quaternary structure, homodimer.

It is found in the cytoplasm. It catalyses the reaction 7-aminomethyl-7-carbaguanine + 2 NADP(+) = 7-cyano-7-deazaguanine + 2 NADPH + 3 H(+). Its pathway is tRNA modification; tRNA-queuosine biosynthesis. Catalyzes the NADPH-dependent reduction of 7-cyano-7-deazaguanine (preQ0) to 7-aminomethyl-7-deazaguanine (preQ1). The polypeptide is NADPH-dependent 7-cyano-7-deazaguanine reductase (Chromohalobacter salexigens (strain ATCC BAA-138 / DSM 3043 / CIP 106854 / NCIMB 13768 / 1H11)).